The chain runs to 783 residues: MSCFSRTFLAASISAALFAPQIQAEASVDDNRAQLPNGEQCLVNQPEPTNPGQQPINVEADKLEAINGQKATYSGNVVVVQGKKRIAADNVTLHQQENVVVAEGNVQFSDGEIKTHSTKATNHLNTDEMTLENTRYQFLCEPGRGEAVYVSKTGKAVYEIEDGSITSCPDGDNAWRMRASSIDVDQNEEIATFYNPRLEVQNVPVFYLPYLTVPIGDTRKTGFLYPTASYGSRNGYSFEVPIYWNLAPQYDLETTFNYMQKRGTQLNSVFRYLTDFGAGQIKSEYLADDQLHTELGDRWAFQYEHNGIFQQAWKFEIDYSKVSDINYFSDLDSGVGNREDGQLIQEGRATYRSDNWDSALLVRDFQLLTKDTTSTNLPYRLMPQLSYNYYAPETMKYLDLDLVSHVSRFETDARGKPSATRVHIEPGLKIPFSNTWGNWTTEARVLGTYYQQDLDKTTDAKLEESVTRVIPEIRSVAGIVLERDTVLLDDYTQTLEPKIQYLYVPEKYQDNIGLYDSTLLQTDYYGLFRSRKYSGVDRIESANQVSYGASTRFFDSNYKERLNIAFGQIFYLDSKLNPSNKNPDSTSDKTSYSAWAVEMDFNFADYLFYHGGIQYDIDSQAVQLGNSTLEYRVASGYIQANYRYVAKDYIRNTVGDSITNIDDITRDGISQAGILAGYQLSRKWSASGQYYYDLTTDEALEWLANLTYTSDCWYVGFTYSNQLKSWNGNFVTDPYATPIYENNFSFNIGIIGFGTSIGAGSSMTGVDSAGNSLGYGRPFFLNN.

The signal sequence occupies residues 1 to 24; it reads MSCFSRTFLAASISAALFAPQIQA.

It belongs to the LptD family. As to quaternary structure, component of the lipopolysaccharide transport and assembly complex. Interacts with LptE and LptA.

The protein resides in the cell outer membrane. In terms of biological role, together with LptE, is involved in the assembly of lipopolysaccharide (LPS) at the surface of the outer membrane. This is LPS-assembly protein LptD from Vibrio cholerae serotype O1 (strain ATCC 39315 / El Tor Inaba N16961).